A 338-amino-acid chain; its full sequence is Sesquiterpene synthase 1 (338 aa).

Mg(2+) is bound by residues D93, N228, S232, and E236. A DDXXD motif motif is present at residues 93–97 (DNISD). The short motif at 228–236 (NDIFSYNVE) is the NSE/DTE motif element. (2E,6E)-farnesyl diphosphate contacts are provided by R316 and Y317.

It belongs to the terpene synthase family. Requires Mg(2+) as cofactor.

The catalysed reaction is (2E,6E)-farnesyl diphosphate = alpha-copaene + diphosphate. It carries out the reaction (2E,6E)-farnesyl diphosphate = beta-copaene + diphosphate. The enzyme catalyses (2E,6E)-farnesyl diphosphate = alpha-muurolene + diphosphate. It catalyses the reaction (2E,6E)-farnesyl diphosphate = gamma-muurolene + diphosphate. The catalysed reaction is (2E,6E)-farnesyl diphosphate = delta-cadinene + diphosphate. In terms of biological role, terpene cyclase that catalyzes the cyclization of farnesyl diphosphate (FPP) to various sesquiterpenes, including alpha-copaene, beta-copaene, beta-elemene, alpha-muurolene, gamma-muurolene and delta-cadinene. The sequence is that of Sesquiterpene synthase 1 from Postia placenta (strain ATCC 44394 / Madison 698-R) (Brown rot fungus).